We begin with the raw amino-acid sequence, 872 residues long: Coatomer subunit gamma-2 (872 aa).

6 HEAT repeats span residues 64–101, 283–320, 321–355, 356–392, 395–430, and 467–504; these read MEATEAFFAMTRLFQSNDQTLRRMCYLTIKEMANISED, RELAPAVSVLQLFCSSPKPALRYAAVRTLNKVAMKHPS, AVTACNLDLENLITDSNRSIATLAITTLLKTGSES, SVDRLMKQISTFVSEISDEFKVVVVQAISALCQKYPR, SVMMTFLSNMLRDDGGFEYKRAIVDCIISIIEENPD, and PTPSKYIRFIFNRVVLENEAVRAAAVSALAKFGAQNEP.

It belongs to the COPG family. Oligomeric complex.

It localises to the cytoplasm. The protein localises to the golgi apparatus membrane. The protein resides in the cytoplasmic vesicle. Its subcellular location is the COPI-coated vesicle membrane. Its function is as follows. The coatomer is a cytosolic protein complex that binds to dilysine motifs and reversibly associates with Golgi non-clathrin-coated vesicles, which further mediate biosynthetic protein transport from the ER, via the Golgi up to the trans Golgi network. Coatomer complex is required for budding from Golgi membranes, and is essential for the retrograde Golgi-to-ER transport of dilysine-tagged proteins. This Xenopus tropicalis (Western clawed frog) protein is Coatomer subunit gamma-2 (copg2).